Here is a 716-residue protein sequence, read N- to C-terminus: MRWLPQISFSSPSSSPSSSLKPVASYSESPDPDRNQDRDRFHRRLFRFNRGRLTRQRKLRHLTDDDVLLGERRASTSSSTFDSGLTRSPSAFTAVPRSPSAVPLPLPLPLPEVAGIRNAANARGLDDRDRDPERLISDRTSSGPPLTSVNGGFARDSRKATENSSYQDFSPRNRNGYWVNIPTMSAPTSPYMSPVPSPQRKSTGHDLPFFYLPPKSNQAWSAPDMPLDTSGLPPPAFYDITAFSTDNSPIHSPQPRSPRKQIRSPQPSRPSSPLHSVDSSAPPRDSVSSPLHPRLSTDVTNGRRDCCNVHPLPLPPGATCSSSSAASVPSPQAPLKLDSFPMNSQWKKGKLIGRGTFGSVYVASNSETGALCAMKEVELFPDDPKSAECIKQLEQEIKLLSNLQHPNIVQYFGSETVEDRFFIYLEYVHPGSINKYIRDHCGTMTESVVRNFTRHILSGLAYLHNKKTVHRDIKGANLLVDASGVVKLADFGMAKHLTGQRADLSLKGSPYWMAPELMQAVMQKDSNPDLAFAVDIWSLGCTIIEMFTGKPPWSEFEGAAAMFKVMRDSPPIPESMSPEGKDFLRLCFQRNPAERPTASMLLEHRFLKNSLQPTSPSNSDVSQLFNGMNITEPSSRREKPNFKLDQVPRARNMTSSESESGQQQQQQQYRSPDLTGTVNRLSPRSTLEAIPSPCPSQRPKPSSSDRRRTGVTSDHL.

Residues 1-27 (MRWLPQISFSSPSSSPSSSLKPVASYS) are compositionally biased toward low complexity. Disordered regions lie at residues 1–42 (MRWL…DRFH), 74–98 (ASTS…VPRS), 119–180 (AANA…YWVN), and 238–302 (YDIT…VTNG). Basic and acidic residues predominate over residues 31-40 (DPDRNQDRDR). Positions 75 to 91 (STSSSTFDSGLTRSPSA) are enriched in polar residues. The segment covering 124–137 (GLDDRDRDPERLIS) has biased composition (basic and acidic residues). Polar residues-rich tracts occupy residues 138-150 (DRTS…TSVN), 162-173 (ENSSYQDFSPRN), and 242-251 (AFSTDNSPIH). Positions 263 to 273 (RSPQPSRPSSP) are enriched in low complexity. The Protein kinase domain occupies 346–607 (WKKGKLIGRG…ASMLLEHRFL (262 aa)). Residues 352 to 360 (IGRGTFGSV) and lysine 375 contribute to the ATP site. The active-site Proton acceptor is the aspartate 472. The span at 610-633 (SLQPTSPSNSDVSQLFNGMNITEP) shows a compositional bias: polar residues. Positions 610 to 716 (SLQPTSPSNS…RRTGVTSDHL (107 aa)) are disordered. Residues serine 617 and serine 622 each carry the phosphoserine; by PBL27 modification. The segment covering 634-648 (SSRREKPNFKLDQVP) has biased composition (basic and acidic residues). 2 stretches are compositionally biased toward polar residues: residues 652 to 661 (NMTSSESESG) and 674 to 685 (LTGTVNRLSPRS). Serine 658 and serine 660 each carry phosphoserine; by PBL27. The residue at position 677 (threonine 677) is a Phosphothreonine; by PBL27. At serine 685 the chain carries Phosphoserine; by PBL27. Basic and acidic residues predominate over residues 703 to 716 (SSDRRRTGVTSDHL).

Belongs to the protein kinase superfamily. STE Ser/Thr protein kinase family. MAP kinase kinase kinase subfamily. As to quaternary structure, interacts with PBL27 at the plasma membrane; disassociation is induced by chitin perception by the CERK1 complex. Interacts with MKK2, MKK4, and MKK5 mainly in the cytosol. Post-translationally, phosphorylated by PBL27 during chitin-mediated signaling in a CERK1-dependent manner. Mostly expressed in flower buds. Also present in pollen, roots, leaves and seedlings, and, at low levels, in stems and immature siliques.

It localises to the cell membrane. Its subcellular location is the cytoplasm. The protein localises to the cytosol. The enzyme catalyses L-seryl-[protein] + ATP = O-phospho-L-seryl-[protein] + ADP + H(+). It carries out the reaction L-threonyl-[protein] + ATP = O-phospho-L-threonyl-[protein] + ADP + H(+). Mitogen-activated protein kinase (MAPK) involved in the transduction of signal between the host cell surface chitin receptor complex CERK1-LYK5 and the intracellular MAPK cascade that leads to chitin-induced immunity. Phosphorylates and activates MAPK targets (e.g. MKK4, MKK5, and possibly MKK2) when phosphorylated by PBL27 after elicitation by chitin. Required for resistance to the fungus A.brassicicola. The protein is Mitogen-activated protein kinase kinase kinase 5 of Arabidopsis thaliana (Mouse-ear cress).